The primary structure comprises 252 residues: Imidazole glycerol phosphate synthase subunit HisF (252 aa).

Active-site residues include aspartate 11 and aspartate 130.

The protein belongs to the HisA/HisF family. In terms of assembly, heterodimer of HisH and HisF.

Its subcellular location is the cytoplasm. The enzyme catalyses 5-[(5-phospho-1-deoxy-D-ribulos-1-ylimino)methylamino]-1-(5-phospho-beta-D-ribosyl)imidazole-4-carboxamide + L-glutamine = D-erythro-1-(imidazol-4-yl)glycerol 3-phosphate + 5-amino-1-(5-phospho-beta-D-ribosyl)imidazole-4-carboxamide + L-glutamate + H(+). The protein operates within amino-acid biosynthesis; L-histidine biosynthesis; L-histidine from 5-phospho-alpha-D-ribose 1-diphosphate: step 5/9. IGPS catalyzes the conversion of PRFAR and glutamine to IGP, AICAR and glutamate. The HisF subunit catalyzes the cyclization activity that produces IGP and AICAR from PRFAR using the ammonia provided by the HisH subunit. The polypeptide is Imidazole glycerol phosphate synthase subunit HisF (Citrifermentans bemidjiense (strain ATCC BAA-1014 / DSM 16622 / JCM 12645 / Bem) (Geobacter bemidjiensis)).